A 91-amino-acid polypeptide reads, in one-letter code: LSCGDVATQLAPCINYLRSAGPLPVACCNGVKNLKNSAATTQDRRTACKCLINASKSISGVNFGLAAGLPGKCGVNIPYKISPSTNCDQVN.

Cystine bridges form between cysteine 3–cysteine 50, cysteine 13–cysteine 27, cysteine 28–cysteine 73, and cysteine 48–cysteine 87.

Its subcellular location is the secreted. Functionally, plant non-specific lipid-transfer proteins transfer phospholipids as well as galactolipids across membranes. May play a role in wax or cutin deposition in the cell walls of expanding epidermal cells and certain secretory tissues. The protein is Non-specific lipid-transfer protein P5 of Vitis sp. (Grape).